The primary structure comprises 732 residues: Polyadenylate-binding protein, cytoplasmic and nuclear (732 aa).

Residues 1–19 (MSAETSTTPAPAENTNGTP) show a composition bias toward polar residues. The disordered stretch occupies residues 1 to 26 (MSAETSTTPAPAENTNGTPDNAPAPE). RRM domains follow at residues 42-120 (ASLY…WSQR), 130-207 (GNVF…HHIS), 223-300 (TNIY…RAQK), and 326-454 (VNLY…LAQR). Disordered stretches follow at residues 357-413 (VMRD…KKPL) and 706-732 (MKNKSDEPAAEKPKEAAQEAPAEENKA). Residues 371–412 (SETKESANKENEKAAEGEKEPAAEEKEKEEKKEAEQKPEKKP) are compositionally biased toward basic and acidic residues. The PABC domain maps to 630–707 (VGVLTAQALS…ALSVYDEYMK (78 aa)).

It belongs to the polyadenylate-binding protein type-1 family.

The protein localises to the cytoplasm. Its subcellular location is the nucleus. Its function is as follows. Binds the poly(A) tail of mRNA. Appears to be an important mediator of the multiple roles of the poly(A) tail in mRNA biogenesis, stability and translation. In the nucleus, involved in both mRNA cleavage and polyadenylation. Is also required for efficient mRNA export to the cytoplasm. Acts in concert with a poly(A)-specific nuclease (PAN) to affect poly(A) tail shortening, which may occur concomitantly with either nucleocytoplasmic mRNA transport or translational initiation. In the cytoplasm, stimulates translation initiation and regulates mRNA decay through translation termination-coupled poly(A) shortening, probably mediated by PAN. The sequence is that of Polyadenylate-binding protein, cytoplasmic and nuclear (pab1) from Emericella nidulans (strain FGSC A4 / ATCC 38163 / CBS 112.46 / NRRL 194 / M139) (Aspergillus nidulans).